Here is a 287-residue protein sequence, read N- to C-terminus: Phosphatidylserine decarboxylase proenzyme (287 aa).

Active-site charge relay system; for autoendoproteolytic cleavage activity residues include D89, H146, and S252. Catalysis depends on S252, which acts as the Schiff-base intermediate with substrate; via pyruvic acid; for decarboxylase activity. Position 252 is a pyruvic acid (Ser); by autocatalysis (S252).

This sequence belongs to the phosphatidylserine decarboxylase family. PSD-B subfamily. Prokaryotic type I sub-subfamily. In terms of assembly, heterodimer of a large membrane-associated beta subunit and a small pyruvoyl-containing alpha subunit. The cofactor is pyruvate. Post-translationally, is synthesized initially as an inactive proenzyme. Formation of the active enzyme involves a self-maturation process in which the active site pyruvoyl group is generated from an internal serine residue via an autocatalytic post-translational modification. Two non-identical subunits are generated from the proenzyme in this reaction, and the pyruvate is formed at the N-terminus of the alpha chain, which is derived from the carboxyl end of the proenzyme. The autoendoproteolytic cleavage occurs by a canonical serine protease mechanism, in which the side chain hydroxyl group of the serine supplies its oxygen atom to form the C-terminus of the beta chain, while the remainder of the serine residue undergoes an oxidative deamination to produce ammonia and the pyruvoyl prosthetic group on the alpha chain. During this reaction, the Ser that is part of the protease active site of the proenzyme becomes the pyruvoyl prosthetic group, which constitutes an essential element of the active site of the mature decarboxylase.

Its subcellular location is the cell membrane. It catalyses the reaction a 1,2-diacyl-sn-glycero-3-phospho-L-serine + H(+) = a 1,2-diacyl-sn-glycero-3-phosphoethanolamine + CO2. It participates in phospholipid metabolism; phosphatidylethanolamine biosynthesis; phosphatidylethanolamine from CDP-diacylglycerol: step 2/2. Catalyzes the formation of phosphatidylethanolamine (PtdEtn) from phosphatidylserine (PtdSer). The chain is Phosphatidylserine decarboxylase proenzyme from Shewanella woodyi (strain ATCC 51908 / MS32).